We begin with the raw amino-acid sequence, 703 residues long: Polyribonucleotide nucleotidyltransferase (703 aa).

Residues aspartate 484 and aspartate 490 each coordinate Mg(2+). The KH domain occupies 551 to 610 (PQMIRMQIDPDKIREVIGPGGKTIHKIVDETGCKIDIEDDGSLFIMATDEEAAKKARFFV). An S1 motif domain is found at 620–694 (GKTYMGTVKR…RQGRVNLSRK (75 aa)).

It belongs to the polyribonucleotide nucleotidyltransferase family. Requires Mg(2+) as cofactor.

It localises to the cytoplasm. The catalysed reaction is RNA(n+1) + phosphate = RNA(n) + a ribonucleoside 5'-diphosphate. In terms of biological role, involved in mRNA degradation. Catalyzes the phosphorolysis of single-stranded polyribonucleotides processively in the 3'- to 5'-direction. This Syntrophomonas wolfei subsp. wolfei (strain DSM 2245B / Goettingen) protein is Polyribonucleotide nucleotidyltransferase.